Reading from the N-terminus, the 712-residue chain is MENLGVGEGAEACSRLSRSRGRHSMTRAPKHLWRQPRRPIRIQQRFYSDPDKSAGCRERDLSPRPELRKSRLSWPVSSCRRFDLENGLSCGRRALDPQSSPGLGRIMQAPVPHSQRRESFLYRSDSDYELSPKAMSRNSSVASDLHGEDMIVTPFAQVLASLRTVRSNVAALARQQCLGAAKQGPVGNPSSSNQLPPAEDTGQKLALETLDELDWCLDQLETLQTRHSVGEMASNKFKRILNRELTHLSETSRSGNQVSEYISRTFLDQQTEVELPKVTAEEAPQPMSRISGLHGLCHSASLSSATVPRFGVQTDQEEQLAKELEDTNKWGLDVFKVAELSGNRPLTAIIFSIFQERDLLKTFQIPADTLATYLLMLEGHYHANVAYHNSLHAADVAQSTHVLLATPALEAVFTDLEILAALFASAIHDVDHPGVSNQFLINTNSELALMYNDASVLENHHLAVGFKLLQAENCDIFQNLSAKQRLSLRRMVIDMVLATDMSKHMNLLADLKTMVETKKVTSLGVLLLDNYSDRIQVLQNLVHCADLSNPTKPLPLYRQWTDRIMAEFFQQGDRERESGLDISPMCDKHTASVEKSQVGFIDYIAHPLWETWADLVHPDAQDLLDTLEDNREWYQSKIPRSPSDLTNPERDGPDRFQFELTLEEAEEEDEEEEEEGEETALAKEALELPDTELLSPEAGPDPGDLPLDNQRT.

2 disordered regions span residues 1–31 (MENL…APKH) and 45–64 (RFYS…LSPR). The span at 17-31 (SRSRGRHSMTRAPKH) shows a compositional bias: basic residues. The segment covering 48–64 (SDPDKSAGCRERDLSPR) has biased composition (basic and acidic residues). S73 bears the Phosphoserine mark. The segment at 181-200 (AKQGPVGNPSSSNQLPPAED) is disordered. Residues 312–641 (VQTDQEEQLA…EWYQSKIPRS (330 aa)) enclose the PDEase domain. The active-site Proton donor is the H388. H388 is a binding site for 3',5'-cyclic AMP. AMP is bound by residues H388 and H392. Zn(2+) contacts are provided by H392, H428, D429, and D546. The AMP site is built by D429, D546, Q597, and F600. D429 contacts Mg(2+). Residue D429 coordinates Mn(2+). Positions 597 and 600 each coordinate 3',5'-cyclic AMP. Disordered stretches follow at residues 636–655 (SKIP…GPDR) and 664–712 (EAEE…NQRT). A Phosphoserine modification is found at S641. Residues 664 to 678 (EAEEEDEEEEEEGEE) are compositionally biased toward acidic residues.

This sequence belongs to the cyclic nucleotide phosphodiesterase family. PDE4 subfamily. Part of a complex containing AKAP5, ADCY5, ADCY6 and PKD2. Requires Zn(2+) as cofactor. Mg(2+) serves as cofactor. Mn(2+) is required as a cofactor. Expressed in various tissues but not in cells of the immune system.

Its subcellular location is the cell projection. The protein resides in the cilium. It carries out the reaction 3',5'-cyclic AMP + H2O = AMP + H(+). The protein operates within purine metabolism; 3',5'-cyclic AMP degradation; AMP from 3',5'-cyclic AMP: step 1/1. Its activity is regulated as follows. Inhibited by rolipram. Its function is as follows. Hydrolyzes the second messenger cAMP, which is a key regulator of many important physiological processes. The chain is 3',5'-cyclic-AMP phosphodiesterase 4C from Homo sapiens (Human).